Consider the following 107-residue polypeptide: Iron-binding protein IscA (107 aa).

Residues Cys35, Cys99, and Cys101 each coordinate Fe cation.

This sequence belongs to the HesB/IscA family. In terms of assembly, homodimer; may form tetramers and higher multimers. Fe cation is required as a cofactor.

Its function is as follows. Is able to transfer iron-sulfur clusters to apo-ferredoxin. Multiple cycles of [2Fe2S] cluster formation and transfer are observed, suggesting that IscA acts catalytically. Recruits intracellular free iron so as to provide iron for the assembly of transient iron-sulfur cluster in IscU in the presence of IscS, L-cysteine and the thioredoxin reductase system TrxA/TrxB. This chain is Iron-binding protein IscA, found in Yersinia pestis bv. Antiqua (strain Angola).